We begin with the raw amino-acid sequence, 334 residues long: GTP 3',8-cyclase (334 aa).

Residues 13-239 (RFHRKFYYLR…KVKAANDGPA (227 aa)) enclose the Radical SAM core domain. Arg22 contributes to the GTP binding site. 2 residues coordinate [4Fe-4S] cluster: Cys29 and Cys33. Tyr35 is an S-adenosyl-L-methionine binding site. Cys36 serves as a coordination point for [4Fe-4S] cluster. Residue Arg73 participates in GTP binding. Position 77 (Gly77) interacts with S-adenosyl-L-methionine. GTP is bound at residue Thr104. Ser128 serves as a coordination point for S-adenosyl-L-methionine. Lys165 provides a ligand contact to GTP. S-adenosyl-L-methionine is bound at residue Met199. Residues Cys262 and Cys265 each coordinate [4Fe-4S] cluster. A GTP-binding site is contributed by 267–269 (RLR). Cys279 provides a ligand contact to [4Fe-4S] cluster.

It belongs to the radical SAM superfamily. MoaA family. Monomer and homodimer. The cofactor is [4Fe-4S] cluster.

It catalyses the reaction GTP + AH2 + S-adenosyl-L-methionine = (8S)-3',8-cyclo-7,8-dihydroguanosine 5'-triphosphate + 5'-deoxyadenosine + L-methionine + A + H(+). It participates in cofactor biosynthesis; molybdopterin biosynthesis. Functionally, catalyzes the cyclization of GTP to (8S)-3',8-cyclo-7,8-dihydroguanosine 5'-triphosphate. This Vibrio vulnificus (strain CMCP6) protein is GTP 3',8-cyclase.